The following is a 315-amino-acid chain: Methionyl-tRNA formyltransferase (315 aa).

A (6S)-5,6,7,8-tetrahydrofolate-binding site is contributed by 112-115 (SLLP).

The protein belongs to the Fmt family.

It catalyses the reaction L-methionyl-tRNA(fMet) + (6R)-10-formyltetrahydrofolate = N-formyl-L-methionyl-tRNA(fMet) + (6S)-5,6,7,8-tetrahydrofolate + H(+). Its function is as follows. Attaches a formyl group to the free amino group of methionyl-tRNA(fMet). The formyl group appears to play a dual role in the initiator identity of N-formylmethionyl-tRNA by promoting its recognition by IF2 and preventing the misappropriation of this tRNA by the elongation apparatus. The protein is Methionyl-tRNA formyltransferase of Leptospira borgpetersenii serovar Hardjo-bovis (strain JB197).